The chain runs to 80 residues: Raniseptin-4 (80 aa).

The first 22 residues, 1-22 (MAFLKKSLFLVLFLGIVSLSIC), serve as a signal peptide directing secretion. Positions 23 to 49 (EEEKREGEEEEKQEEENEELSEEELRD) are excised as a propeptide.

Belongs to the frog skin active peptide (FSAP) family. Dermaseptin subfamily. As to expression, expressed by the skin glands.

It is found in the secreted. Its function is as follows. Has antibacterial activity. In Boana raniceps (Chaco tree frog), this protein is Raniseptin-4.